A 360-amino-acid polypeptide reads, in one-letter code: Phosphoserine aminotransferase (360 aa).

Arginine 42 is a binding site for L-glutamate. Residues tryptophan 102, threonine 152, aspartate 171, and glutamine 194 each contribute to the pyridoxal 5'-phosphate site. At lysine 195 the chain carries N6-(pyridoxal phosphate)lysine. 237 to 238 (NT) is a pyridoxal 5'-phosphate binding site.

This sequence belongs to the class-V pyridoxal-phosphate-dependent aminotransferase family. SerC subfamily. As to quaternary structure, homodimer. Pyridoxal 5'-phosphate is required as a cofactor.

It is found in the cytoplasm. The catalysed reaction is O-phospho-L-serine + 2-oxoglutarate = 3-phosphooxypyruvate + L-glutamate. It catalyses the reaction 4-(phosphooxy)-L-threonine + 2-oxoglutarate = (R)-3-hydroxy-2-oxo-4-phosphooxybutanoate + L-glutamate. The protein operates within amino-acid biosynthesis; L-serine biosynthesis; L-serine from 3-phospho-D-glycerate: step 2/3. Its pathway is cofactor biosynthesis; pyridoxine 5'-phosphate biosynthesis; pyridoxine 5'-phosphate from D-erythrose 4-phosphate: step 3/5. Catalyzes the reversible conversion of 3-phosphohydroxypyruvate to phosphoserine and of 3-hydroxy-2-oxo-4-phosphonooxybutanoate to phosphohydroxythreonine. In Coxiella burnetii (strain CbuK_Q154) (Coxiella burnetii (strain Q154)), this protein is Phosphoserine aminotransferase.